We begin with the raw amino-acid sequence, 185 residues long: Ribosome-recycling factor (185 aa).

Belongs to the RRF family.

The protein localises to the cytoplasm. Its function is as follows. Responsible for the release of ribosomes from messenger RNA at the termination of protein biosynthesis. May increase the efficiency of translation by recycling ribosomes from one round of translation to another. The polypeptide is Ribosome-recycling factor (Bacillus licheniformis (strain ATCC 14580 / DSM 13 / JCM 2505 / CCUG 7422 / NBRC 12200 / NCIMB 9375 / NCTC 10341 / NRRL NRS-1264 / Gibson 46)).